The following is an 871-amino-acid chain: Alanine--tRNA ligase (871 aa).

Zn(2+) contacts are provided by His559, His563, Cys661, and His665.

This sequence belongs to the class-II aminoacyl-tRNA synthetase family. Zn(2+) is required as a cofactor.

The protein localises to the cytoplasm. It catalyses the reaction tRNA(Ala) + L-alanine + ATP = L-alanyl-tRNA(Ala) + AMP + diphosphate. Its function is as follows. Catalyzes the attachment of alanine to tRNA(Ala) in a two-step reaction: alanine is first activated by ATP to form Ala-AMP and then transferred to the acceptor end of tRNA(Ala). Also edits incorrectly charged Ser-tRNA(Ala) and Gly-tRNA(Ala) via its editing domain. The protein is Alanine--tRNA ligase of Aquifex pyrophilus.